Consider the following 313-residue polypeptide: Glucan 1,3-beta-glucosidase (313 aa).

Residues 1–23 (MRFSTTLATAATALFFTASQVSA) form the signal peptide. Residue glutamate 124 is the Proton donor of the active site. A glycan (N-linked (GlcNAc...) asparagine) is linked at asparagine 202. Glutamate 233 serves as the catalytic Nucleophile. The N-linked (GlcNAc...) asparagine glycan is linked to asparagine 284.

It belongs to the glycosyl hydrolase 17 family.

It is found in the secreted. Its subcellular location is the cell wall. It carries out the reaction Successive hydrolysis of beta-D-glucose units from the non-reducing ends of (1-&gt;3)-beta-D-glucans, releasing alpha-glucose.. Functionally, glucanases possibly play a role in cell expansion during growth, in cell-cell fusion during mating, and in spore release during sporulation. This enzyme may be involved in beta-glucan degradation and also function biosynthetically as a transglycosylase. This chain is Glucan 1,3-beta-glucosidase (BGL2), found in Saccharomyces cerevisiae (strain ATCC 204508 / S288c) (Baker's yeast).